Consider the following 559-residue polypeptide: DNA primase (559 aa).

The segment at Cys37–Cys61 adopts a CHC2-type zinc-finger fold. Residues Lys246–Asn327 form the Toprim domain. Positions 252, 296, and 298 each coordinate Mg(2+).

It belongs to the DnaG primase family. As to quaternary structure, monomer. Interacts with DnaB. Requires Zn(2+) as cofactor. Mg(2+) is required as a cofactor.

It catalyses the reaction ssDNA + n NTP = ssDNA/pppN(pN)n-1 hybrid + (n-1) diphosphate.. Functionally, RNA polymerase that catalyzes the synthesis of short RNA molecules used as primers for DNA polymerase during DNA replication. The sequence is that of DNA primase from Helicobacter pylori (strain J99 / ATCC 700824) (Campylobacter pylori J99).